A 63-amino-acid chain; its full sequence is Large ribosomal subunit protein bL32 (63 aa).

A disordered region spans residues 1 to 22 (MANPKAKMSKSRRDKRRAQFNA). Residues 7–18 (KMSKSRRDKRRA) are compositionally biased toward basic residues.

Belongs to the bacterial ribosomal protein bL32 family.

This chain is Large ribosomal subunit protein bL32, found in Chlorobium limicola (strain DSM 245 / NBRC 103803 / 6330).